Consider the following 912-residue polypeptide: Tiger protein E1 (912 aa).

A signal peptide spans 1–22; that stretch reads MKLKHLTIFLFIFIYRFLFVKS. The Extracellular portion of the chain corresponds to 23–815; sequence DCYLINNERP…YSENKSSGFP (793 aa). 20 N-linked (GlcNAc...) asparagine glycosylation sites follow: N54, N108, N164, N183, N232, N268, N323, N356, N398, N407, N568, N637, N653, N658, N706, N716, N763, N774, N781, and N809. 2 consecutive IPT/TIG domains span residues 532–609 and 612–686; these read SSDQ…GPFT and PVIE…PLII. The region spanning 715–796 is the IPT/TIG 3 domain; that stretch reads TNTSDIDQTA…DGQYFIAQIF (82 aa). A helical membrane pass occupies residues 816 to 836; it reads NEMYIGIVAIIIFLALIFFAI. Topologically, residues 837 to 912 are cytoplasmic; the sequence is KTQVEKYIEE…IRCCFKEHTD (76 aa).

Its subcellular location is the cell membrane. This is Tiger protein E1 (tgrE1) from Dictyostelium discoideum (Social amoeba).